A 147-amino-acid polypeptide reads, in one-letter code: Hemoglobin subunit beta (147 aa).

Val-2 carries the N-acetylvaline modification. The Globin domain occupies 3-147; sequence HLSGSEKTAV…VSHALAHKYH (145 aa). At Thr-13 the chain carries Phosphothreonine. Ser-45 is modified (phosphoserine). Lys-60 carries the N6-acetyllysine modification. Position 64 (His-64) interacts with heme b. At Lys-83 the chain carries N6-acetyllysine. Residue His-93 coordinates heme b. Position 94 is an S-nitrosocysteine (Cys-94). At Lys-145 the chain carries N6-acetyllysine.

Belongs to the globin family. As to quaternary structure, heterotetramer of two alpha chains and two beta chains. In terms of tissue distribution, red blood cells.

Involved in oxygen transport from the lung to the various peripheral tissues. The sequence is that of Hemoglobin subunit beta (HBB) from Tachyglossus aculeatus aculeatus (Southeast Australian short-beaked echidna).